A 419-amino-acid polypeptide reads, in one-letter code: Peptide chain release factor subunit 1 (419 aa).

The protein belongs to the eukaryotic release factor 1 family. Heterodimer of two subunits, one of which binds GTP.

Its subcellular location is the cytoplasm. Functionally, directs the termination of nascent peptide synthesis (translation) in response to the termination codons UAA, UAG and UGA. This is Peptide chain release factor subunit 1 from Methanococcus maripaludis (strain DSM 14266 / JCM 13030 / NBRC 101832 / S2 / LL).